Reading from the N-terminus, the 70-residue chain is Probable non-specific lipid-transfer protein 2 (70 aa).

4 cysteine pairs are disulfide-bonded: Cys4–Cys38, Cys12–Cys26, Cys27–Cys62, and Cys36–Cys69.

Potential phospholipid transfer protein. The protein is Probable non-specific lipid-transfer protein 2 of Zea mays (Maize).